Reading from the N-terminus, the 64-residue chain is Prokaryotic ubiquitin-like protein Pup (64 aa).

Positions 1-11 (MAQEQTKRTGG) are enriched in basic and acidic residues. Residues 1–38 (MAQEQTKRTGGGDEDDTPGGDGAAGQERREKLAEDTDD) form a disordered region. The segment at 21–58 (DGAAGQERREKLAEDTDDLLDEIDDVLEENAEDFVRAY) is ARC ATPase binding. Residues 24 to 52 (AGQERREKLAEDTDDLLDEIDDVLEENAE) are a coiled coil. Gln64 is modified (deamidated glutamine). An Isoglutamyl lysine isopeptide (Gln-Lys) (interchain with K-? in acceptor proteins) cross-link involves residue Gln64.

The protein belongs to the prokaryotic ubiquitin-like protein family. As to quaternary structure, strongly interacts with the proteasome-associated ATPase ARC through a hydrophobic interface; the interacting region of Pup lies in its C-terminal half. There is one Pup binding site per ARC hexamer ring. Post-translationally, is modified by deamidation of its C-terminal glutamine to glutamate by the deamidase Dop, a prerequisite to the subsequent pupylation process.

It functions in the pathway protein degradation; proteasomal Pup-dependent pathway. In terms of biological role, protein modifier that is covalently attached to lysine residues of substrate proteins, thereby targeting them for proteasomal degradation. The tagging system is termed pupylation. This chain is Prokaryotic ubiquitin-like protein Pup, found in Rhodococcus opacus (strain B4).